Here is a 329-residue protein sequence, read N- to C-terminus: Deoxynucleotidyltransferase terminal-interacting protein 1 (329 aa).

The tract at residues 1–27 (MGATGDVEQPRGPGGAERGGPELGDAG) is disordered. A compositionally biased stretch (gly residues) spans 12 to 22 (GPGGAERGGPE). The interval 56-147 (MTTSFTDPAI…RLTHELPGIK (92 aa)) is important for dimerization. The segment at residues 159 to 173 (RGSPIPKKRKGRPPG) is a DNA-binding region (a.T hook). The residue at position 161 (S161) is a Phosphoserine. Residues 164-170 (PKKRKGR) carry the Nuclear localization signal motif. Residues 197-316 (REGPKWDPAR…MRKYMETLRT (120 aa)) are important for DNA and nucleosome binding. Residues 216-237 (GSRANKALGMGGTRGRIYIKHP) constitute a DNA-binding region (H-T-H motif).

In terms of assembly, monomer and homodimer. A minor proportion may form homotrimers. Interacts with ZNF541. Interacts with the terminal deoxynucleotidyltransferase DNTT. Interacts with TRERF1. Identified in a histone deacetylase complex that contains DNTTIP1, HDAC1 and MIDEAS; this complex assembles into a tetramer that contains four copies of each protein chain. Component of a histone deacetylase complex containing DNTTIP1, ZNF541, HDAC1 and HDAC2. Identified in a complex with KCTD19, HDAC1, HDAC2 and ZNF541.

The protein resides in the nucleus. Increases DNTT terminal deoxynucleotidyltransferase activity (in vitro). Also acts as a transcriptional regulator, binding to the consensus sequence 5'-GNTGCATG-3' following an AT-tract. Associates with RAB20 promoter and positively regulates its transcription. Binds DNA and nucleosomes; may recruit HDAC1 complexes to nucleosomes or naked DNA. This Bos taurus (Bovine) protein is Deoxynucleotidyltransferase terminal-interacting protein 1 (DNTTIP1).